A 360-amino-acid polypeptide reads, in one-letter code: Nicotinate-nucleotide--dimethylbenzimidazole phosphoribosyltransferase (360 aa).

Catalysis depends on Glu-327, which acts as the Proton acceptor.

The protein belongs to the CobT family.

The enzyme catalyses 5,6-dimethylbenzimidazole + nicotinate beta-D-ribonucleotide = alpha-ribazole 5'-phosphate + nicotinate + H(+). The protein operates within nucleoside biosynthesis; alpha-ribazole biosynthesis; alpha-ribazole from 5,6-dimethylbenzimidazole: step 1/2. Its function is as follows. Catalyzes the synthesis of alpha-ribazole-5'-phosphate from nicotinate mononucleotide (NAMN) and 5,6-dimethylbenzimidazole (DMB). The sequence is that of Nicotinate-nucleotide--dimethylbenzimidazole phosphoribosyltransferase from Shewanella baltica (strain OS185).